We begin with the raw amino-acid sequence, 141 residues long: Hemoglobin subunit alpha-3 (141 aa).

Residues valine 1–arginine 141 enclose the Globin domain. Histidine 58 contributes to the O2 binding site. A heme b-binding site is contributed by histidine 87.

It belongs to the globin family. As to quaternary structure, heterotetramer of two alpha chains and two beta chains. In terms of tissue distribution, red blood cells.

In terms of biological role, involved in oxygen transport from the lung to the various peripheral tissues. The polypeptide is Hemoglobin subunit alpha-3 (Gorilla gorilla gorilla (Western lowland gorilla)).